Reading from the N-terminus, the 401-residue chain is Succinyl-diaminopimelate desuccinylase (401 aa).

Histidine 71 is a Zn(2+) binding site. The active site involves aspartate 73. Position 104 (aspartate 104) interacts with Zn(2+). The Proton acceptor role is filled by glutamate 138. Positions 139, 167, and 352 each coordinate Zn(2+).

This sequence belongs to the peptidase M20A family. DapE subfamily. As to quaternary structure, homodimer. The cofactor is Zn(2+). Co(2+) is required as a cofactor.

The enzyme catalyses N-succinyl-(2S,6S)-2,6-diaminopimelate + H2O = (2S,6S)-2,6-diaminopimelate + succinate. Its pathway is amino-acid biosynthesis; L-lysine biosynthesis via DAP pathway; LL-2,6-diaminopimelate from (S)-tetrahydrodipicolinate (succinylase route): step 3/3. Its function is as follows. Catalyzes the hydrolysis of N-succinyl-L,L-diaminopimelic acid (SDAP), forming succinate and LL-2,6-diaminopimelate (DAP), an intermediate involved in the bacterial biosynthesis of lysine and meso-diaminopimelic acid, an essential component of bacterial cell walls. This is Succinyl-diaminopimelate desuccinylase from Wolbachia sp. subsp. Brugia malayi (strain TRS).